The primary structure comprises 363 residues: Holliday junction branch migration complex subunit RuvB (363 aa).

Residues 1-23 (MHKDEDQRLLGPAPLPNDPDRSL) form a disordered region. Residues 1-184 (MHKDEDQRLL…FGIPIRLNFY (184 aa)) form a large ATPase domain (RuvB-L) region. ATP contacts are provided by residues Leu-23, Arg-24, Gly-65, Lys-68, Thr-69, Thr-70, 131–133 (EDY), Arg-174, Tyr-184, and Arg-221. Position 69 (Thr-69) interacts with Mg(2+). The interval 185–255 (TIEELEYIVQ…IADEALSRLE (71 aa)) is small ATPAse domain (RuvB-S). The interval 258 to 363 (HLGLDPLDRR…QTTLWDGEDD (106 aa)) is head domain (RuvB-H). Residues Arg-294, Arg-313, and Arg-318 each contribute to the DNA site.

It belongs to the RuvB family. As to quaternary structure, homohexamer. Forms an RuvA(8)-RuvB(12)-Holliday junction (HJ) complex. HJ DNA is sandwiched between 2 RuvA tetramers; dsDNA enters through RuvA and exits via RuvB. An RuvB hexamer assembles on each DNA strand where it exits the tetramer. Each RuvB hexamer is contacted by two RuvA subunits (via domain III) on 2 adjacent RuvB subunits; this complex drives branch migration. In the full resolvosome a probable DNA-RuvA(4)-RuvB(12)-RuvC(2) complex forms which resolves the HJ.

It is found in the cytoplasm. It carries out the reaction ATP + H2O = ADP + phosphate + H(+). Functionally, the RuvA-RuvB-RuvC complex processes Holliday junction (HJ) DNA during genetic recombination and DNA repair, while the RuvA-RuvB complex plays an important role in the rescue of blocked DNA replication forks via replication fork reversal (RFR). RuvA specifically binds to HJ cruciform DNA, conferring on it an open structure. The RuvB hexamer acts as an ATP-dependent pump, pulling dsDNA into and through the RuvAB complex. RuvB forms 2 homohexamers on either side of HJ DNA bound by 1 or 2 RuvA tetramers; 4 subunits per hexamer contact DNA at a time. Coordinated motions by a converter formed by DNA-disengaged RuvB subunits stimulates ATP hydrolysis and nucleotide exchange. Immobilization of the converter enables RuvB to convert the ATP-contained energy into a lever motion, pulling 2 nucleotides of DNA out of the RuvA tetramer per ATP hydrolyzed, thus driving DNA branch migration. The RuvB motors rotate together with the DNA substrate, which together with the progressing nucleotide cycle form the mechanistic basis for DNA recombination by continuous HJ branch migration. Branch migration allows RuvC to scan DNA until it finds its consensus sequence, where it cleaves and resolves cruciform DNA. The protein is Holliday junction branch migration complex subunit RuvB of Bartonella tribocorum (strain CIP 105476 / IBS 506).